A 239-amino-acid polypeptide reads, in one-letter code: MEHPILFLNLLFEKLGLHVVGPEQAKSFGDFLLQPHVTYTWVVMLVLLGLGSMAAKGLEMVPKGAQNFFEVVITGIEDFMISITGEEGRFVFPLIASLGMFILFSNYLGMIPGFFSPTANINTTAACALISVVFTHVIGIKFHGVKYIKHFMGPVWWLTPLIMPIEIIGHIARVLSLSIRLFGNVFGEELVLGILFFLAGFYLAPLPMMFLGLFTGFIQAFIFCLLSMMYFAGAIEHAH.

6 helical membrane-spanning segments follow: residues 31–51 (FLLQ…LGLG), 91–111 (VFPL…LGMI), 125–145 (AACA…FHGV), 151–171 (FMGP…IGHI), 194–214 (ILFF…LGLF), and 215–235 (TGFI…AGAI).

Belongs to the ATPase A chain family. F-type ATPases have 2 components, CF(1) - the catalytic core - and CF(0) - the membrane proton channel. CF(1) has five subunits: alpha(3), beta(3), gamma(1), delta(1), epsilon(1). CF(0) has three main subunits: a(1), b(2) and c(9-12). The alpha and beta chains form an alternating ring which encloses part of the gamma chain. CF(1) is attached to CF(0) by a central stalk formed by the gamma and epsilon chains, while a peripheral stalk is formed by the delta and b chains.

It localises to the cell inner membrane. Functionally, key component of the proton channel; it plays a direct role in the translocation of protons across the membrane. The protein is ATP synthase subunit a of Syntrophobacter fumaroxidans (strain DSM 10017 / MPOB).